The following is a 41-amino-acid chain: Photosystem I reaction center subunit IX (41 aa).

Residues 7 to 27 (YLSTAPVVAFAWITITAGLLI) traverse the membrane as a helical segment.

It belongs to the PsaJ family.

It is found in the plastid. It localises to the chloroplast thylakoid membrane. Its function is as follows. May help in the organization of the PsaE and PsaF subunits. The polypeptide is Photosystem I reaction center subunit IX (Oedogonium cardiacum (Filamentous green alga)).